We begin with the raw amino-acid sequence, 1169 residues long: Polyamine-transporting ATPase 13A2 (1169 aa).

Residues Met1 to Pro44 lie on the Cytoplasmic side of the membrane. Residues Trp45–Phe65 lie within the membrane without spanning it. Topologically, residues Arg66 to Gln225 are cytoplasmic. Residues Leu226 to Trp246 traverse the membrane as a helical segment. The Lumenal portion of the chain corresponds to Leu247 to His250. The chain crosses the membrane as a helical span at residues Tyr251–Tyr271. At Lys272–Lys422 the chain is on the cytoplasmic side. The chain crosses the membrane as a helical span at residues Phe423 to Tyr443. Residues Arg444 to Asp458 lie on the Lumenal side of the membrane. Residues Leu459–Ala479 form a helical membrane-spanning segment. The Cytoplasmic portion of the chain corresponds to Gln480–Ser919. The active-site 4-aspartylphosphate intermediate is the Asp508. 2 residues coordinate Mg(2+): Asp867 and Asp871. Residues Phe920–Leu940 traverse the membrane as a helical segment. Topologically, residues Tyr941–Asn946 are lumenal. A helical membrane pass occupies residues Leu947–Met967. Residues Ser968 to Ser993 are Cytoplasmic-facing. Residues Leu994–Ala1014 traverse the membrane as a helical segment. Residues Gln1015–Thr1037 lie on the Lumenal side of the membrane. An N-linked (GlcNAc...) asparagine glycan is attached at Asn1022. Residues Val1038–Ala1058 traverse the membrane as a helical segment. At Pro1059–Pro1069 the chain is on the cytoplasmic side. Residues Phe1070–Leu1090 traverse the membrane as a helical segment. Residues Leu1091 to Lys1106 are Lumenal-facing. The chain crosses the membrane as a helical span at residues Leu1107–Leu1127. Residues Asp1128–Arg1169 are Cytoplasmic-facing.

Belongs to the cation transport ATPase (P-type) (TC 3.A.3) family. Type V subfamily. Interacts with MYCBP2; the interaction inhibits the ubiquitination of TSC2 by MYCBP2. Interacts with HDAC6; the interaction results in recruitment of HDAC6 to lysosomes to promote CTTN deacetylation. Post-translationally, autophosphorylated. Accumulates in an inactive autophosphorylated state and autophosphorylation is stimulated by phosphatidic acid and phosphatidylinositol 3,5-bisphosphate but not by Mn(2+) or Zn(2+). The presence of spermine results in a dose-dependent reduction in autophosphorylation.

It localises to the lysosome membrane. Its subcellular location is the late endosome membrane. It is found in the endosome. The protein localises to the multivesicular body membrane. The protein resides in the cytoplasmic vesicle. It localises to the autophagosome membrane. The enzyme catalyses spermidine(out) + ATP + H2O = spermidine(in) + ADP + phosphate + H(+). The catalysed reaction is spermine(out) + ATP + H2O = spermine(in) + ADP + phosphate + H(+). Accumulates in an inactive autophosphorylated state. The presence of spermine results in a dose-dependent reduction in autophosphorylation. In terms of biological role, ATPase which acts as a lysosomal polyamine exporter with high affinity for spermine. Also stimulates cellular uptake of polyamines and protects against polyamine toxicity. Plays a role in intracellular cation homeostasis and the maintenance of neuronal integrity. Contributes to cellular zinc homeostasis. Confers cellular protection against Mn(2+) and Zn(2+) toxicity and mitochondrial stress. Required for proper lysosomal and mitochondrial maintenance. Regulates the autophagy-lysosome pathway through the control of SYT11 expression at both transcriptional and post-translational levels. Facilitates recruitment of deacetylase HDAC6 to lysosomes to deacetylate CTTN, leading to actin polymerization, promotion of autophagosome-lysosome fusion and completion of autophagy. Promotes secretion of exosomes as well as secretion of SCNA via exosomes. Plays a role in lipid homeostasis. This Mus musculus (Mouse) protein is Polyamine-transporting ATPase 13A2.